A 603-amino-acid polypeptide reads, in one-letter code: Elongation factor 4 (603 aa).

A tr-type G domain is found at 2–184 (NHIRNFSIIA…AVIARVPPPK (183 aa)). Residues 14–19 (DHGKST) and 131–134 (NKMD) each bind GTP.

The protein belongs to the TRAFAC class translation factor GTPase superfamily. Classic translation factor GTPase family. LepA subfamily.

It is found in the cell inner membrane. The enzyme catalyses GTP + H2O = GDP + phosphate + H(+). Required for accurate and efficient protein synthesis under certain stress conditions. May act as a fidelity factor of the translation reaction, by catalyzing a one-codon backward translocation of tRNAs on improperly translocated ribosomes. Back-translocation proceeds from a post-translocation (POST) complex to a pre-translocation (PRE) complex, thus giving elongation factor G a second chance to translocate the tRNAs correctly. Binds to ribosomes in a GTP-dependent manner. In Polaromonas sp. (strain JS666 / ATCC BAA-500), this protein is Elongation factor 4.